The following is a 131-amino-acid chain: DNA-directed RNA polymerases I, II, and III subunit RPABC2 (131 aa).

Positions 1 to 24 are disordered; it reads MDDADYDNDDVGGDDFDDVDEDVD.

It belongs to the archaeal Rpo6/eukaryotic RPB6 RNA polymerase subunit family. Component of the RNA polymerase I (Pol I), RNA polymerase II (Pol II) and RNA polymerase III (Pol III) complexes consisting of at least 13, 12 and 17 subunits, respectively.

It is found in the nucleus. Its function is as follows. DNA-dependent RNA polymerases catalyze the transcription of DNA into RNA using the four ribonucleoside triphosphates as substrates. Common component of RNA polymerases I, II and III which synthesize ribosomal RNA precursors, mRNA precursors and many functional non-coding RNAs, and small RNAs, such as 5S rRNA and tRNAs, respectively. Pol II is the central component of the basal RNA polymerase II transcription machinery. Pols are composed of mobile elements that move relative to each other. In Pol II, Polr2F/RPB6 is part of the clamp element and together with parts of Polr2A/RPB1 and RPB2 forms a pocket to which the Polr2D/RPB4-Polr2G/RPB7 subcomplex binds. The protein is DNA-directed RNA polymerases I, II, and III subunit RPABC2 of Drosophila melanogaster (Fruit fly).